Consider the following 21-residue polypeptide: Granule-bound starch synthase 1 (21 aa).

This sequence belongs to the glycosyltransferase 1 family. Bacterial/plant glycogen synthase subfamily.

It is found in the plastid. It localises to the chloroplast. Its subcellular location is the amyloplast. The enzyme catalyses an NDP-alpha-D-glucose + [(1-&gt;4)-alpha-D-glucosyl](n) = [(1-&gt;4)-alpha-D-glucosyl](n+1) + a ribonucleoside 5'-diphosphate + H(+). It participates in glycan biosynthesis; starch biosynthesis. The protein is Granule-bound starch synthase 1 of Secale cereale (Rye).